A 217-amino-acid polypeptide reads, in one-letter code: GTP cyclohydrolase-2 (217 aa).

Arginine 50 to glutamate 54 contacts GTP. Positions 55, 66, and 68 each coordinate Zn(2+). GTP is bound by residues glutamine 71, glutamate 93–arginine 95, and threonine 115. Catalysis depends on aspartate 127, which acts as the Proton acceptor. The Nucleophile role is filled by arginine 129. Residues threonine 150 and lysine 155 each contribute to the GTP site.

It belongs to the GTP cyclohydrolase II family. Requires Zn(2+) as cofactor.

It catalyses the reaction GTP + 4 H2O = 2,5-diamino-6-hydroxy-4-(5-phosphoribosylamino)-pyrimidine + formate + 2 phosphate + 3 H(+). Its pathway is cofactor biosynthesis; riboflavin biosynthesis; 5-amino-6-(D-ribitylamino)uracil from GTP: step 1/4. Functionally, catalyzes the conversion of GTP to 2,5-diamino-6-ribosylamino-4(3H)-pyrimidinone 5'-phosphate (DARP), formate and pyrophosphate. The chain is GTP cyclohydrolase-2 from Actinobacillus succinogenes (strain ATCC 55618 / DSM 22257 / CCUG 43843 / 130Z).